A 311-amino-acid chain; its full sequence is Light-independent protochlorophyllide reductase iron-sulfur ATP-binding protein (311 aa).

Residues 10–15 and Lys39 contribute to the ATP site; that span reads GIGKST. Ser14 is a Mg(2+) binding site. The [4Fe-4S] cluster site is built by Cys95 and Cys129. Residue 180-181 participates in ATP binding; sequence NR.

Belongs to the NifH/BchL/ChlL family. In terms of assembly, homodimer. Protochlorophyllide reductase is composed of three subunits; ChlL, ChlN and ChlB. [4Fe-4S] cluster is required as a cofactor.

The protein resides in the plastid. It localises to the chloroplast. It carries out the reaction chlorophyllide a + oxidized 2[4Fe-4S]-[ferredoxin] + 2 ADP + 2 phosphate = protochlorophyllide a + reduced 2[4Fe-4S]-[ferredoxin] + 2 ATP + 2 H2O. It functions in the pathway porphyrin-containing compound metabolism; chlorophyll biosynthesis (light-independent). Component of the dark-operative protochlorophyllide reductase (DPOR) that uses Mg-ATP and reduced ferredoxin to reduce ring D of protochlorophyllide (Pchlide) to form chlorophyllide a (Chlide). This reaction is light-independent. The L component serves as a unique electron donor to the NB-component of the complex, and binds Mg-ATP. The polypeptide is Light-independent protochlorophyllide reductase iron-sulfur ATP-binding protein (Oltmannsiellopsis viridis (Marine flagellate)).